A 639-amino-acid polypeptide reads, in one-letter code: 1-deoxy-D-xylulose-5-phosphate synthase (639 aa).

Residues His-76 and 117-119 (AHS) each bind thiamine diphosphate. Asp-148 lines the Mg(2+) pocket. Thiamine diphosphate-binding positions include 149–150 (GS), Asn-181, Tyr-288, and Glu-370. Residue Asn-181 participates in Mg(2+) binding.

It belongs to the transketolase family. DXPS subfamily. As to quaternary structure, homodimer. It depends on Mg(2+) as a cofactor. Thiamine diphosphate is required as a cofactor.

It carries out the reaction D-glyceraldehyde 3-phosphate + pyruvate + H(+) = 1-deoxy-D-xylulose 5-phosphate + CO2. It functions in the pathway metabolic intermediate biosynthesis; 1-deoxy-D-xylulose 5-phosphate biosynthesis; 1-deoxy-D-xylulose 5-phosphate from D-glyceraldehyde 3-phosphate and pyruvate: step 1/1. In terms of biological role, catalyzes the acyloin condensation reaction between C atoms 2 and 3 of pyruvate and glyceraldehyde 3-phosphate to yield 1-deoxy-D-xylulose-5-phosphate (DXP). This chain is 1-deoxy-D-xylulose-5-phosphate synthase, found in Leptothrix cholodnii (strain ATCC 51168 / LMG 8142 / SP-6) (Leptothrix discophora (strain SP-6)).